The primary structure comprises 473 residues: Putative sulfoquinovose importer (473 aa).

Transmembrane regions (helical) follow at residues 18-38 (AYGV…LYLL), 45-65 (LGMP…FTAF), 88-108 (PFIL…FFAT), 110-130 (FTLP…GLFY), 160-180 (GGAT…QALF), 187-207 (GYLI…WWCF), 239-259 (LLVL…KLAI), 276-296 (WMGF…PAAV), 317-337 (ILNF…CIAF), 380-400 (ISAA…GYIP), and 415-435 (LIFL…GFFY).

The protein belongs to the sodium:galactoside symporter (TC 2.A.2) family.

It localises to the cell inner membrane. In terms of biological role, could be involved in sulfoquinovose import. In Salmonella typhimurium (strain LT2 / SGSC1412 / ATCC 700720), this protein is Putative sulfoquinovose importer (yihO).